Reading from the N-terminus, the 167-residue chain is Insertion element IS1 1 protein InsB (167 aa).

This sequence belongs to the transposase 27 family.

Absolutely required for transposition of IS1. The chain is Insertion element IS1 1 protein InsB (insB1) from Escherichia coli (strain K12).